The following is a 297-amino-acid chain: RNA polymerase sigma-F factor (297 aa).

The segment at 1 to 46 (MTVPASTAPQVPPQQDPQVPHPQEPREEPHEEPPSPPAAPRPQSRG) is disordered. Residues 10–22 (QVPPQQDPQVPHP) show a composition bias toward pro residues. Residues 23–33 (QEPREEPHEEP) show a composition bias toward basic and acidic residues. The short motif at 101–114 (DVVQVGTIGLINAI) is the Polymerase core binding element. The segment at residues 264–283 (QSQISAELGVSQMHVSRLLA) is a DNA-binding region (H-T-H motif).

This sequence belongs to the sigma-70 factor family. SigB subfamily.

In terms of biological role, sigma factors are initiation factors that promote the attachment of RNA polymerase to specific initiation sites and are then released. This sigma factor is required for normal spore maturation. This is RNA polymerase sigma-F factor (sigF) from Kitasatospora aureofaciens (Streptomyces aureofaciens).